Reading from the N-terminus, the 559-residue chain is Formate--tetrahydrofolate ligase (559 aa).

66–73 (TPPGEGKT) serves as a coordination point for ATP.

The protein belongs to the formate--tetrahydrofolate ligase family.

It carries out the reaction (6S)-5,6,7,8-tetrahydrofolate + formate + ATP = (6R)-10-formyltetrahydrofolate + ADP + phosphate. It participates in one-carbon metabolism; tetrahydrofolate interconversion. The chain is Formate--tetrahydrofolate ligase from Nocardioides sp. (strain ATCC BAA-499 / JS614).